A 404-amino-acid polypeptide reads, in one-letter code: Acetate kinase (404 aa).

Residue N7 participates in Mg(2+) binding. K14 is a binding site for ATP. R95 contributes to the substrate binding site. The active-site Proton donor/acceptor is the D152. ATP-binding positions include 212 to 216, 286 to 288, and 334 to 338; these read HLGNG, DMR, and GIGEN. E388 is a binding site for Mg(2+).

The protein belongs to the acetokinase family. Homodimer. It depends on Mg(2+) as a cofactor. Mn(2+) is required as a cofactor.

Its subcellular location is the cytoplasm. It carries out the reaction acetate + ATP = acetyl phosphate + ADP. Its pathway is metabolic intermediate biosynthesis; acetyl-CoA biosynthesis; acetyl-CoA from acetate: step 1/2. Its function is as follows. Catalyzes the formation of acetyl phosphate from acetate and ATP. Can also catalyze the reverse reaction. This is Acetate kinase from Lawsonia intracellularis (strain PHE/MN1-00).